A 357-amino-acid chain; its full sequence is 3-isopropylmalate dehydrogenase, chloroplastic (357 aa).

The transit peptide at 1 to 29 (MALQIAKRLLRCRADSVASSVRFFDRTFT) directs the protein to the chloroplast. Substrate-binding residues include Arg120, Arg130, Arg151, and Asp238. Asp238, Asp262, and Asp266 together coordinate Mg(2+). Residue 296 to 308 (GSAPDIAGKNLAN) participates in NAD(+) binding.

Belongs to the isocitrate and isopropylmalate dehydrogenases family. In terms of assembly, homodimer. Requires Mg(2+) as cofactor. It depends on Mn(2+) as a cofactor.

It is found in the plastid. The protein localises to the chloroplast. It catalyses the reaction (2R,3S)-3-isopropylmalate + NAD(+) = 4-methyl-2-oxopentanoate + CO2 + NADH. Its pathway is amino-acid biosynthesis; L-leucine biosynthesis; L-leucine from 3-methyl-2-oxobutanoate: step 3/4. Its function is as follows. Catalyzes the oxidation of 3-carboxy-2-hydroxy-4-methylpentanoate (3-isopropylmalate) to 3-carboxy-4-methyl-2-oxopentanoate. The product decarboxylates to 4-methyl-2 oxopentanoate. This is 3-isopropylmalate dehydrogenase, chloroplastic from Solanum tuberosum (Potato).